The primary structure comprises 233 residues: Chaperone protein MrkB (233 aa).

Positions 1 to 18 (MKRIALFFCFIFSFAAHA) are cleaved as a signal peptide.

This sequence belongs to the periplasmic pilus chaperone family.

It is found in the periplasm. In terms of biological role, mediates assembly of pili by forming soluble multimeric complexes with pili subunits as an intermediate step in the assembly process. This protein is involved in type 3 pili assembly. The chain is Chaperone protein MrkB (mrkB) from Klebsiella pneumoniae.